The following is a 238-amino-acid chain: uncharacterized protein (238 aa).

7 helical membrane-spanning segments follow: residues 19–39 (FIYG…LLGW), 64–84 (WSVI…IYNW), 85–105 (QVLY…YFTK), 112–132 (LWND…SYYF), 141–161 (ILWV…YVKS), 176–196 (VIFH…ILAL), and 218–238 (VGLI…VATL).

To B.subtilis YwiC.

The protein resides in the cell membrane. This is an uncharacterized protein from Haemophilus influenzae (strain ATCC 51907 / DSM 11121 / KW20 / Rd).